We begin with the raw amino-acid sequence, 137 residues long: F420H(2)-dependent biliverdin reductase (137 aa).

Residues 36-41, 54-55, 60-61, Arg67, and 78-81 each bind coenzyme F420-(gamma-Glu)n; these read HVVAVG, IT, QK, and GARW.

Belongs to the F420H(2)-dependent biliverdin reductase family. In terms of assembly, homodimer.

The protein localises to the cell surface. Its subcellular location is the secreted. It carries out the reaction (4Z,15Z)-bilirubin IXalpha + oxidized coenzyme F420-(gamma-L-Glu)(n) + H(+) = biliverdin IXalpha + reduced coenzyme F420-(gamma-L-Glu)(n). In terms of biological role, catalyzes the F420H(2)-dependent reduction of biliverdin-IXalpha at C10 position, leading to bilirubin-IXalpha, a potent antioxidant. As biliverdin-IXalpha is produced in high amounts in macrophages infected with M.tuberculosis, its reduction by Rv2074 may play a role in protecting mycobacteria against oxidative stress, aiding the persistence of M.tuberculosis infection. The chain is F420H(2)-dependent biliverdin reductase from Mycobacterium tuberculosis (strain CDC 1551 / Oshkosh).